A 159-amino-acid polypeptide reads, in one-letter code: Succinate dehydrogenase [ubiquinone] cytochrome b small subunit, mitochondrial (159 aa).

The N-terminal 36 residues, Met1–Gln36, are a transit peptide targeting the mitochondrion. Topologically, residues Asp37–Ser63 are mitochondrial matrix. A helical transmembrane segment spans residues Leu64 to Leu85. The Mitochondrial intermembrane segment spans residues Asn86 to Ala90. Residues Met91–Val111 form a helical membrane-spanning segment. A heme b-binding site is contributed by His102. Topologically, residues Thr112–Leu120 are mitochondrial matrix. Residue Tyr114 participates in a ubiquinone binding. The chain crosses the membrane as a helical span at residues Gln121–Phe142. Topologically, residues Asn143–Leu159 are mitochondrial intermembrane.

This sequence belongs to the CybS family. In terms of assembly, component of complex II composed of four subunits: the flavoprotein (FP) SDHA, iron-sulfur protein (IP) SDHB, and a cytochrome b560 composed of SDHC and SDHD.

Its subcellular location is the mitochondrion inner membrane. It participates in carbohydrate metabolism; tricarboxylic acid cycle. Membrane-anchoring subunit of succinate dehydrogenase (SDH) that is involved in complex II of the mitochondrial electron transport chain and is responsible for transferring electrons from succinate to ubiquinone (coenzyme Q). SDH also oxidizes malate to the non-canonical enol form of oxaloacetate, enol-oxaloacetate. Enol-oxaloacetate, which is a potent inhibitor of the succinate dehydrogenase activity, is further isomerized into keto-oxaloacetate. This is Succinate dehydrogenase [ubiquinone] cytochrome b small subunit, mitochondrial (SDHD) from Sus scrofa (Pig).